A 392-amino-acid polypeptide reads, in one-letter code: Selenide, water dikinase 1 (392 aa).

Ser-2 carries the N-acetylserine modification. The active site involves Cys-31. Residues Lys-32, 67–69, Asp-87, Asp-110, and 161–164 contribute to the ATP site; these read GMD and GGQT. Position 69 (Asp-69) interacts with Mg(2+). A Mg(2+)-binding site is contributed by Asp-110. Asp-265 provides a ligand contact to Mg(2+).

Belongs to the selenophosphate synthase 1 family. Class II subfamily. In terms of assembly, homodimer. Requires Mg(2+) as cofactor.

It is found in the cell membrane. Its subcellular location is the nucleus membrane. It catalyses the reaction hydrogenselenide + ATP + H2O = selenophosphate + AMP + phosphate + 2 H(+). Synthesizes selenophosphate from selenide and ATP. The protein is Selenide, water dikinase 1 (Sephs1) of Mus musculus (Mouse).